The following is a 720-amino-acid chain: MEDSGVNPMDSPSKGSDFGVYGIIGGGIVALLVPVLLSVVLNGTKKGKKRGVPIKVGGEEGYTMRHARAPELVDVPWEGAATMPALFEQSCKKYSKDRLLGTREFIDKEFITASDGRKFEKLHLGEYKWQSYGEVFERVCNFASGLVNVGHNVDDRVAIFSDTRAEWFIAFQGCFRQSITVVTIYASLGEEALIYSLNETRVSTLICDSKQLKKLSAIQSSLKTVKNIIYIEEDGVDVASSDVNSMGDITVSSISEVEKLGQKNAVQPILPSKNGVAVIMFTSGSTGLPKGVMITHGNLVATAAGVMKVVPKLDKNDTYIAYLPLAHVFELEAEIVVFTSGSAIGYGSAMTLTDTSNKVKKGTKGDVSALKPTIMTAVPAILDRVREGVLKKVEEKGGMAKTLFDFAYKRRLAAVDGSWFGAWGLEKMLWDALVFKKIRAVLGGHIRFMLVGGAPLSPDSQRFINICMGSPIGQGYGLTETCAGATFSEWDDPAVGRVGPPLPCGYVKLVSWEEGGYRISDKPMPRGEIVVGGNSVTAGYFNNQEKTDEVYKVDEKGTRWFYTGDIGRFHPDGCLEVIDRKKDIVKLQHGEYVSLGKVEAALGSSNYVDNIMVHADPINSYCVALVVPSRGALEKWAEEAGVKHSEFAELCEKGEAVKEVQQSLTKAGKAAKLEKFELPAKIKLLSEPWTPESGLVTAALKIKREQIKSKFKDELSKLYA.

Residue Met-1 is modified to N-acetylmethionine. 279–290 (IMFTSGSTGLPK) is an ATP binding site. A fatty acid-binding region spans residues 554–582 (DEKGTRWFYTGDIGRFHPDGCLEVIDRKK).

The protein belongs to the ATP-dependent AMP-binding enzyme family. Mg(2+) serves as cofactor.

It carries out the reaction a long-chain fatty acid + ATP + CoA = a long-chain fatty acyl-CoA + AMP + diphosphate. Its pathway is lipid metabolism; fatty acid metabolism. Its function is as follows. Activation of long-chain fatty acids for both synthesis of cellular lipids, and degradation via beta-oxidation. Preferentially uses palmitate, palmitoleate, oleate and linoleate. The sequence is that of Long chain acyl-CoA synthetase 8 (LACS8) from Arabidopsis thaliana (Mouse-ear cress).